The chain runs to 155 residues: Ribosome-binding factor A (155 aa).

Composition is skewed to basic and acidic residues over residues 116–125 (ARQRDQEVAR) and 142–155 (SPHE…ADGW). Residues 116 to 155 (ARQRDQEVARQAEGATPAGDANPYKTSPHEGRPESEADGW) are disordered.

It belongs to the RbfA family. Monomer. Binds 30S ribosomal subunits, but not 50S ribosomal subunits or 70S ribosomes.

The protein resides in the cytoplasm. Its function is as follows. One of several proteins that assist in the late maturation steps of the functional core of the 30S ribosomal subunit. Associates with free 30S ribosomal subunits (but not with 30S subunits that are part of 70S ribosomes or polysomes). Required for efficient processing of 16S rRNA. May interact with the 5'-terminal helix region of 16S rRNA. The sequence is that of Ribosome-binding factor A from Corynebacterium kroppenstedtii (strain DSM 44385 / JCM 11950 / CIP 105744 / CCUG 35717).